The following is a 637-amino-acid chain: Limonene/alpha-pinene synthase, chloroplastic (637 aa).

The N-terminal 56 residues, 1–56, are a transit peptide targeting the chloroplast; it reads MALLSIVSLQVPKSCGLKSLISSSNVQKALCISTAVPTLRMRRRQKALVINMKLTT. Mg(2+) contacts are provided by Asp-388, Asp-392, and Asp-540. The short motif at 388–392 is the DDXXD motif element; it reads DDMYD.

It belongs to the terpene synthase family. Tpsd subfamily. It depends on Mg(2+) as a cofactor. Mn(2+) is required as a cofactor. Requires K(+) as cofactor.

The protein localises to the plastid. Its subcellular location is the chloroplast. The enzyme catalyses (2E)-geranyl diphosphate = (4S)-limonene + diphosphate. The catalysed reaction is (2E)-geranyl diphosphate = (1S,5S)-alpha-pinene + diphosphate. The protein operates within terpene metabolism; oleoresin biosynthesis. Involved in defensive oleoresin formation in conifers in response to insect attack or other injury. Involved in monoterpene (C10) olefins biosynthesis. This chain is Limonene/alpha-pinene synthase, chloroplastic (ag11), found in Abies grandis (Grand fir).